We begin with the raw amino-acid sequence, 271 residues long: 3-methyl-2-oxobutanoate hydroxymethyltransferase (271 aa).

The Mg(2+) site is built by Asp-51 and Asp-90. 3-methyl-2-oxobutanoate contacts are provided by residues 51–52 (DS), Asp-90, and Lys-118. Position 120 (Glu-120) interacts with Mg(2+). Catalysis depends on Glu-186, which acts as the Proton acceptor.

It belongs to the PanB family. In terms of assembly, homodecamer; pentamer of dimers. Mg(2+) serves as cofactor.

Its subcellular location is the cytoplasm. It catalyses the reaction 3-methyl-2-oxobutanoate + (6R)-5,10-methylene-5,6,7,8-tetrahydrofolate + H2O = 2-dehydropantoate + (6S)-5,6,7,8-tetrahydrofolate. It participates in cofactor biosynthesis; (R)-pantothenate biosynthesis; (R)-pantoate from 3-methyl-2-oxobutanoate: step 1/2. Functionally, catalyzes the reversible reaction in which hydroxymethyl group from 5,10-methylenetetrahydrofolate is transferred onto alpha-ketoisovalerate to form ketopantoate. The chain is 3-methyl-2-oxobutanoate hydroxymethyltransferase from Xanthomonas oryzae pv. oryzae (strain MAFF 311018).